Reading from the N-terminus, the 743-residue chain is Catalase-peroxidase (743 aa).

A compositionally biased stretch (polar residues) spans 1 to 15; sequence MSSDSRPPQPDTSTQ. Residues 1–40 form a disordered region; that stretch reads MSSDSRPPQPDTSTQSNSESESPAISSPTPQDHAPMTNRD. A compositionally biased stretch (low complexity) spans 16 to 28; the sequence is SNSESESPAISSP. Residues 110–233 constitute a cross-link (tryptophyl-tyrosyl-methioninium (Trp-Tyr) (with M-259)); sequence WHAAGTYRIQ…YGATTMGLIY (124 aa). H111 (proton acceptor) is an active-site residue. The tryptophyl-tyrosyl-methioninium (Tyr-Met) (with W-110) cross-link spans 233 to 259; the sequence is YVNPEGPEGKPDPVAAAHDIRETFARM. A heme b-binding site is contributed by H274. The segment at 490–511 is disordered; sequence DKRGGANGGRLRLEPQKSWESN.

The protein belongs to the peroxidase family. Peroxidase/catalase subfamily. In terms of assembly, homodimer or homotetramer. Heme b serves as cofactor. In terms of processing, formation of the three residue Trp-Tyr-Met cross-link is important for the catalase, but not the peroxidase activity of the enzyme.

It carries out the reaction H2O2 + AH2 = A + 2 H2O. It catalyses the reaction 2 H2O2 = O2 + 2 H2O. Functionally, bifunctional enzyme with both catalase and broad-spectrum peroxidase activity. This chain is Catalase-peroxidase, found in Mycobacterium marinum (strain ATCC BAA-535 / M).